The primary structure comprises 487 residues: NADH-quinone oxidoreductase subunit N (487 aa).

Helical transmembrane passes span 12–32, 40–60, 79–99, 104–124, 129–149, 164–184, 201–221, 248–268, 281–301, 310–330, 332–352, 378–398, 411–431, and 455–475; these read VLIL…LIGV, LTVT…IVLF, YMKI…VGFS, FDIF…MLMI, MLSL…LAAI, FVLG…LYGF, ILHL…AFKI, APKI…FIPL, ILIF…IGQT, SSIG…ILGV, GILI…AFIL, AIVM…AGFF, GLVP…FYYL, and LCLC…FWFS.

It belongs to the complex I subunit 2 family. NDH-1 is composed of 14 different subunits. Subunits NuoA, H, J, K, L, M, N constitute the membrane sector of the complex.

The protein localises to the cell inner membrane. The enzyme catalyses a quinone + NADH + 5 H(+)(in) = a quinol + NAD(+) + 4 H(+)(out). Its function is as follows. NDH-1 shuttles electrons from NADH, via FMN and iron-sulfur (Fe-S) centers, to quinones in the respiratory chain. The immediate electron acceptor for the enzyme in this species is believed to be ubiquinone. Couples the redox reaction to proton translocation (for every two electrons transferred, four hydrogen ions are translocated across the cytoplasmic membrane), and thus conserves the redox energy in a proton gradient. In Bartonella bacilliformis (strain ATCC 35685 / KC583 / Herrer 020/F12,63), this protein is NADH-quinone oxidoreductase subunit N.